The primary structure comprises 362 residues: Chorismate synthase (362 aa).

Position 46 (R46) interacts with NADP(+). FMN contacts are provided by residues 122 to 124, 238 to 239, G278, 293 to 297, and R319; these read RSS, NA, and KPTPS.

Belongs to the chorismate synthase family. In terms of assembly, homotetramer. Requires FMNH2 as cofactor.

The catalysed reaction is 5-O-(1-carboxyvinyl)-3-phosphoshikimate = chorismate + phosphate. It participates in metabolic intermediate biosynthesis; chorismate biosynthesis; chorismate from D-erythrose 4-phosphate and phosphoenolpyruvate: step 7/7. Catalyzes the anti-1,4-elimination of the C-3 phosphate and the C-6 proR hydrogen from 5-enolpyruvylshikimate-3-phosphate (EPSP) to yield chorismate, which is the branch point compound that serves as the starting substrate for the three terminal pathways of aromatic amino acid biosynthesis. This reaction introduces a second double bond into the aromatic ring system. The protein is Chorismate synthase of Campylobacter jejuni subsp. doylei (strain ATCC BAA-1458 / RM4099 / 269.97).